The chain runs to 1189 residues: MYKLQVVLVPPSLQATMPIQFGYGPTIAESSQLLPNRTNMAQSAGDASLQYANLRSANVSFTPSYFNQSRFRKFLLFTKPTNTLLNLSDEIIDKCEKMYPSLQEDIEILSLQDNSGCDLDPDFLVKDVFNVNNIVRVILKNEIDLDDSAPVSLYKSVKRSKLNNGSPQSVQPQQQIPSSSGVLRIAKKRPPTGTTTTTTIRSATNGSMRVSTPLARQIYPPPSSKIVSNNSDDEDEDIGERSFLPPPTQPQSPPIRISSGIDAGKKIKSSIVEEDIVSRSATVDPDKTKQQRLLSGTPIMSTMTPNRVTLTGQRVVSEHAHKNELVFSASASSSSFANGGTAAVTAQDINRKPPVTTPRITSGMLKIPEPRISEIEKELKEGPSSPASILPAKAAKIPMKKPYLENGENYESDDSSSSENQETPETEPHSKASLQRSQSSIADNNGSPVKNSPLGDAMPHNVHLAELPKASNTSITKSSNGESWGKQQEHQPPRKSSLETIVEKKSQAEPSGIVEPKRMTNFLDDNQVREKEDTNDKLLEKEILPTIPHNDQPILASSDKSNGTLKSLAGKVSSNNNASKEDGTIINGTIEDDGNDNDEVDTTVRIVPQDSDSSSFPKSDLFKMIEGDDTDLPQWFKGKNSRTSGNSKNSKPYTTVLNKDIDNSKPDPRNILPQRTPRSAAKRAAQLLAGAKKNEVPQKSTEDSSSAASTDDESESGIETDFSSDDDFKRKNMSVPNNGPKDISLHSLKGSVVPVKDSKIINKEVDEERNDKRDSQKKSAVSESSVTNSKISEQMAKSFYPNSNKKQNEATKVETKPATQASSFPVVGGSPSVATKGTTSFNEEGNRKNVKTKAKNESAQIDRQQKETTSRVADLKSANIGGEDLNKKAEGSKEPEKASANIQDANDKNNSKEKEDSKSKQVSQKKLKMTDHLKEGNVQLPKPSANDKLKDLKAKFTNSKTLVPPGIISNEKNNSSANDDDSSSSGSSTEDESSSSSSSSDEETSTSRKARRVVVNTPREPVRSSSKIEAPSPSVNKKINATPDKIPVTQLMDMSSPPSVKSKTTSNPSSILHDLPRKVRPSLSSLSDLVSRGIPDVKEKTSKSNEKSQTKAPSSSDDESSSDSDSNSSSDSVSDSSSDSKSESDSDDSGDSSDDGKSFISAKSASAALGKKKKPSGGFASLIKDFKKK.

Ser60 and Ser166 each carry phosphoserine. Disordered stretches follow at residues 160–260 (SKLN…ISSG) and 345–1189 (TAQD…FKKK). The span at 166–180 (SPQSVQPQQQIPSSS) shows a compositional bias: low complexity. The span at 200-210 (IRSATNGSMRV) shows a compositional bias: polar residues. Phosphoserine occurs at positions 231 and 252. Residues 244-253 (LPPPTQPQSP) show a composition bias toward pro residues. Basic and acidic residues predominate over residues 368 to 381 (PEPRISEIEKELKE). The segment covering 391 to 407 (PAKAAKIPMKKPYLENG) has biased composition (low complexity). Positions 432–450 (ASLQRSQSSIADNNGSPVK) are enriched in polar residues. 4 positions are modified to phosphoserine: Ser437, Ser439, Ser447, and Ser452. A compositionally biased stretch (polar residues) spans 470-486 (ASNTSITKSSNGESWGK). Ser497 bears the Phosphoserine mark. The span at 526–543 (NQVREKEDTNDKLLEKEI) shows a compositional bias: basic and acidic residues. Over residues 590–601 (IEDDGNDNDEVD) the composition is skewed to acidic residues. The span at 641–657 (SRTSGNSKNSKPYTTVL) shows a compositional bias: polar residues. Residues 659–668 (KDIDNSKPDP) show a composition bias toward basic and acidic residues. Residue Thr676 is modified to Phosphothreonine. Residues 682–691 (KRAAQLLAGA) show a composition bias toward low complexity. The span at 692–702 (KKNEVPQKSTE) shows a compositional bias: basic and acidic residues. Residues 710–725 (TDDESESGIETDFSSD) are compositionally biased toward acidic residues. The segment covering 756 to 777 (KDSKIINKEVDEERNDKRDSQK) has biased composition (basic and acidic residues). Residues 778-792 (KSAVSESSVTNSKIS) show a composition bias toward polar residues. Over residues 806 to 815 (KQNEATKVET) the composition is skewed to basic and acidic residues. Over residues 822–833 (SSFPVVGGSPSV) the composition is skewed to low complexity. At Ser830 the chain carries Phosphoserine. 3 stretches are compositionally biased toward basic and acidic residues: residues 884-897 (DLNKKAEGSKEPEK), 905-919 (ANDKNNSKEKEDSKS), and 945-954 (ANDKLKDLKA). Positions 969–999 (SNEKNNSSANDDDSSSSGSSTEDESSSSSSS) are enriched in low complexity. Residues 1023-1039 (RSSSKIEAPSPSVNKKI) are compositionally biased toward polar residues. The residue at position 1042 (Thr1042) is a Phosphothreonine. Low complexity predominate over residues 1055–1070 (SSPPSVKSKTTSNPSS). Phosphoserine occurs at positions 1056 and 1059. Residues 1095-1109 (PDVKEKTSKSNEKSQ) show a composition bias toward basic and acidic residues. Low complexity-rich tracts occupy residues 1123–1137 (DSDSNSSSDSVSDSS) and 1158–1169 (SFISAKSASAAL).

This sequence to yeast YKR010c. In terms of assembly, component of the RENT complex which is composed of at least NET1, CDC14 and SIR2. Interacts with NSI1. Post-translationally, phosphorylated by CDC5.

It is found in the nucleus. The protein localises to the nucleolus. Has a role in chromosome maintenance and is involved in mitotic exit. Inhibits the action of CDC14 by sequestering it in the nucleolus. Also binds to RNA polymerase I and stimulates rRNA synthesis. Influences RDNA chromatin by tethering SIR2 to rDNA in the nucleolus. This Saccharomyces cerevisiae (strain ATCC 204508 / S288c) (Baker's yeast) protein is Nucleolar protein NET1 (NET1).